Here is a 32-residue protein sequence, read N- to C-terminus: Dermaseptin-L1 (32 aa).

Expressed by the skin glands.

It localises to the secreted. Its function is as follows. Antimicrobial peptide active against the Gram-negative bacterium E.coli (MIC=8 uM) but inactive against the Gram-positive bacterium S.aureus. Also inhibits growth of zoospores of the chytrid fungus B.dendrobatidis at high concentrations (above 25 uM). Shows anticancer activities since it is cytolytic against HepG2 human hepatoma-derived cells (LC(50)=45 uM). Is only weakly hemolytic on human erythrocytes. The chain is Dermaseptin-L1 from Agalychnis lemur (Lemur leaf frog).